The sequence spans 440 residues: Transposon Ty1-JR1 Gag polyprotein (440 aa).

Residues 1 to 16 (MESQQLSQHSHISHGS) are compositionally biased toward low complexity. Disordered regions lie at residues 1 to 93 (MESQ…MMTQ), 126 to 173 (PQSQ…RPPP), and 352 to 440 (GSRN…PGTY). 2 stretches are compositionally biased toward polar residues: residues 48–60 (TKANSQQTTTPAS) and 127–152 (QSQFPQYPSSVGTPLSTPSPESGNTF). Low complexity predominate over residues 153-165 (TDSSSADSDMTST). Residues 299-401 (NNGIHINNKV…NSKSKTARAH (103 aa)) form an RNA-binding region. A compositionally biased stretch (low complexity) spans 402-418 (NVSTSNNSPSTDNDSIS). Ser416 is subject to Phosphoserine. The segment covering 419–428 (KSTTEPIQLN) has biased composition (polar residues). The span at 429–440 (NKHDLHLRPGTY) shows a compositional bias: basic and acidic residues.

In terms of assembly, homotrimer.

The protein resides in the cytoplasm. Capsid protein (CA) is the structural component of the virus-like particle (VLP), forming the shell that encapsulates the retrotransposons dimeric RNA genome. The particles are assembled from trimer-clustered units and there are holes in the capsid shells that allow for the diffusion of macromolecules. CA also has nucleocapsid-like chaperone activity, promoting primer tRNA(i)-Met annealing to the multipartite primer-binding site (PBS), dimerization of Ty1 RNA and initiation of reverse transcription. In Saccharomyces cerevisiae (strain ATCC 204508 / S288c) (Baker's yeast), this protein is Transposon Ty1-JR1 Gag polyprotein (TY1A-JR1).